Here is a 480-residue protein sequence, read N- to C-terminus: Protein nucleotidyltransferase YdiU (480 aa).

The ATP site is built by Gly-86, Gly-88, Arg-89, Lys-109, Asp-121, Gly-122, Arg-172, and Arg-179. The active-site Proton acceptor is Asp-248. Mg(2+)-binding residues include Asn-249 and Asp-258. Asp-258 is a binding site for ATP.

This sequence belongs to the SELO family. It depends on Mg(2+) as a cofactor. Requires Mn(2+) as cofactor.

The catalysed reaction is L-seryl-[protein] + ATP = 3-O-(5'-adenylyl)-L-seryl-[protein] + diphosphate. The enzyme catalyses L-threonyl-[protein] + ATP = 3-O-(5'-adenylyl)-L-threonyl-[protein] + diphosphate. It catalyses the reaction L-tyrosyl-[protein] + ATP = O-(5'-adenylyl)-L-tyrosyl-[protein] + diphosphate. It carries out the reaction L-histidyl-[protein] + UTP = N(tele)-(5'-uridylyl)-L-histidyl-[protein] + diphosphate. The catalysed reaction is L-seryl-[protein] + UTP = O-(5'-uridylyl)-L-seryl-[protein] + diphosphate. The enzyme catalyses L-tyrosyl-[protein] + UTP = O-(5'-uridylyl)-L-tyrosyl-[protein] + diphosphate. In terms of biological role, nucleotidyltransferase involved in the post-translational modification of proteins. It can catalyze the addition of adenosine monophosphate (AMP) or uridine monophosphate (UMP) to a protein, resulting in modifications known as AMPylation and UMPylation. This is Protein nucleotidyltransferase YdiU from Salmonella choleraesuis (strain SC-B67).